Here is an 836-residue protein sequence, read N- to C-terminus: Phenylalanine--tRNA ligase beta subunit (836 aa).

The region spanning 44-160 (PETTGPLVIG…EIAEPGTDAR (117 aa)) is the tRNA-binding domain. The B5 domain occupies 420–495 (PSMPQIRMKT…RLEGLEDIPT (76 aa)). Residues Asp-473, Asp-479, Glu-482, and Glu-483 each coordinate Mg(2+). The region spanning 742-835 (SAFPVLHQDL…AAELFGATMR (94 aa)) is the FDX-ACB domain.

This sequence belongs to the phenylalanyl-tRNA synthetase beta subunit family. Type 1 subfamily. As to quaternary structure, tetramer of two alpha and two beta subunits. The cofactor is Mg(2+).

The protein localises to the cytoplasm. The enzyme catalyses tRNA(Phe) + L-phenylalanine + ATP = L-phenylalanyl-tRNA(Phe) + AMP + diphosphate + H(+). In Corynebacterium diphtheriae (strain ATCC 700971 / NCTC 13129 / Biotype gravis), this protein is Phenylalanine--tRNA ligase beta subunit.